The following is an 851-amino-acid chain: DNA mismatch repair protein MutS (851 aa).

614-621 contacts ATP; sequence GPNMGGKS.

Belongs to the DNA mismatch repair MutS family.

Functionally, this protein is involved in the repair of mismatches in DNA. It is possible that it carries out the mismatch recognition step. This protein has a weak ATPase activity. The protein is DNA mismatch repair protein MutS of Yersinia enterocolitica serotype O:8 / biotype 1B (strain NCTC 13174 / 8081).